Here is a 137-residue protein sequence, read N- to C-terminus: Putative nickel-responsive regulator (137 aa).

Positions 79, 90, 92, and 98 each coordinate Ni(2+).

Belongs to the transcriptional regulatory CopG/NikR family. Ni(2+) serves as cofactor.

Its function is as follows. Transcriptional regulator. This chain is Putative nickel-responsive regulator, found in Campylobacter concisus (strain 13826).